The chain runs to 124 residues: Large ribosomal subunit protein bL17 (124 aa).

The protein belongs to the bacterial ribosomal protein bL17 family. In terms of assembly, part of the 50S ribosomal subunit. Contacts protein L32.

The chain is Large ribosomal subunit protein bL17 from Acidithiobacillus ferrooxidans (strain ATCC 23270 / DSM 14882 / CIP 104768 / NCIMB 8455) (Ferrobacillus ferrooxidans (strain ATCC 23270)).